The primary structure comprises 354 residues: Histidinol-phosphate aminotransferase (354 aa).

The residue at position 215 (Lys-215) is an N6-(pyridoxal phosphate)lysine.

This sequence belongs to the class-II pyridoxal-phosphate-dependent aminotransferase family. Histidinol-phosphate aminotransferase subfamily. In terms of assembly, homodimer. Pyridoxal 5'-phosphate serves as cofactor.

It carries out the reaction L-histidinol phosphate + 2-oxoglutarate = 3-(imidazol-4-yl)-2-oxopropyl phosphate + L-glutamate. It participates in amino-acid biosynthesis; L-histidine biosynthesis; L-histidine from 5-phospho-alpha-D-ribose 1-diphosphate: step 7/9. This chain is Histidinol-phosphate aminotransferase, found in Vesicomyosocius okutanii subsp. Calyptogena okutanii (strain HA).